Consider the following 152-residue polypeptide: MDSKVVIYTDGACAGNPGPGGWGALLQFNDTSKEVFGYELDTTNNRMEITAALEALRILKKSCNIEIYTDSKYLQQGITAWIHNWIKNNWCKSNNEPVKNADLWQKLYAELSKHTIIWKWVKGHANNSGNIAADKLAVQGRETAIEILKCRG.

One can recognise an RNase H type-1 domain in the interval 1–142; sequence MDSKVVIYTD…ADKLAVQGRE (142 aa). The Mg(2+) site is built by Asp10, Glu48, Asp70, and Asp134.

This sequence belongs to the RNase H family. In terms of assembly, monomer. Requires Mg(2+) as cofactor.

Its subcellular location is the cytoplasm. It carries out the reaction Endonucleolytic cleavage to 5'-phosphomonoester.. Endonuclease that specifically degrades the RNA of RNA-DNA hybrids. This Rickettsia conorii (strain ATCC VR-613 / Malish 7) protein is Ribonuclease HI.